The primary structure comprises 1219 residues: DNA ligase 4 (1219 aa).

Positions 251, 253, 258, 273, 303, 342, 418, 423, 434, 440, and 442 each coordinate ATP. Residue Lys-253 is the N6-AMP-lysine intermediate of the active site. Glu-303 contacts Mg(2+). Glu-418 contributes to the Mg(2+) binding site. Residues 604-632 (NGTTQKQKESESTQDNPKVNKSSKRGEKK) are disordered. BRCT domains are found at residues 651–739 (GKTS…PKYF) and 807–909 (VYFY…VYTL). Disordered stretches follow at residues 914-1126 (MEES…MDMK) and 1146-1197 (IPSQ…SDVV). Polar residues predominate over residues 932 to 960 (VASQGSAQTKEPASSKIAITSSRGRSNTR). Residues 1042–1051 (QRSRRGKKAA) are compositionally biased toward basic residues. Acidic residues predominate over residues 1056-1065 (DESDENDELD). 2 stretches are compositionally biased toward basic and acidic residues: residues 1084-1096 (VENEETREPDIAK) and 1117-1126 (RNAKTEMDMK). A compositionally biased stretch (polar residues) spans 1148 to 1159 (SQKTTETSNRTT).

This sequence belongs to the ATP-dependent DNA ligase family. In terms of assembly, interacts with XRCC4 via its tandem BRCT domains. Interacts with POLL. Mg(2+) serves as cofactor. In terms of tissue distribution, widely expressed, with higher levels in young flowers and roots.

Its subcellular location is the nucleus. The catalysed reaction is ATP + (deoxyribonucleotide)n-3'-hydroxyl + 5'-phospho-(deoxyribonucleotide)m = (deoxyribonucleotide)n+m + AMP + diphosphate.. Functionally, DNA ligase involved in DNA non-homologous end joining (NHEJ); required for double-strand break (DSB) repair. May be involved for T-DNA integration even if not absolutely required. Seems to be dispensable under normal growth conditions. This chain is DNA ligase 4 (LIG4), found in Arabidopsis thaliana (Mouse-ear cress).